Reading from the N-terminus, the 453-residue chain is F-box/FBD/LRR-repeat protein At4g00160 (453 aa).

An F-box domain is found at 15–68 (KDRISELPDALLIKILSFLPTKIVVATSVFSKQWRPLWKLVPNLEFDSEDYDDK). LRR repeat units follow at residues 89 to 111 (LESF…LWVG), 165 to 190 (MKSL…LLSG), 215 to 239 (VPSL…VINA), 247 to 270 (IEDL…IFDG), 282 to 307 (LTSV…IFYQ), and 331 to 358 (SPKL…KWNE). In terms of domain architecture, FBD spans 355–406 (KWNEPKYVPECLLSHLETFVWRRFDWGREEEKEIATYILKNARRLNKATFST).

The polypeptide is F-box/FBD/LRR-repeat protein At4g00160 (Arabidopsis thaliana (Mouse-ear cress)).